The primary structure comprises 572 residues: Urease subunit alpha (572 aa).

Residues 134–572 (GGIDAHVHFI…LPMAQRYFLF (439 aa)) form the Urease domain. Ni(2+) is bound by residues histidine 139, histidine 141, and lysine 222. Lysine 222 carries the N6-carboxylysine modification. Histidine 224 contacts substrate. Residues histidine 251 and histidine 277 each coordinate Ni(2+). The active-site Proton donor is the histidine 325. Ni(2+) is bound at residue aspartate 365.

This sequence belongs to the metallo-dependent hydrolases superfamily. Urease alpha subunit family. Heterotrimer of UreA (gamma), UreB (beta) and UreC (alpha) subunits. Three heterotrimers associate to form the active enzyme. Ni cation is required as a cofactor. Carboxylation allows a single lysine to coordinate two nickel ions.

It is found in the cytoplasm. It carries out the reaction urea + 2 H2O + H(+) = hydrogencarbonate + 2 NH4(+). Its pathway is nitrogen metabolism; urea degradation; CO(2) and NH(3) from urea (urease route): step 1/1. The sequence is that of Urease subunit alpha from Synechococcus sp. (strain JA-2-3B'a(2-13)) (Cyanobacteria bacterium Yellowstone B-Prime).